A 218-amino-acid polypeptide reads, in one-letter code: Ribose-5-phosphate isomerase A (218 aa).

Residues 28–31, 81–84, and 94–97 contribute to the substrate site; these read TGST, DSAD, and KGGG. The Proton acceptor role is filled by E103. Position 121 (K121) interacts with substrate.

The protein belongs to the ribose 5-phosphate isomerase family. Homodimer.

The catalysed reaction is aldehydo-D-ribose 5-phosphate = D-ribulose 5-phosphate. It participates in carbohydrate degradation; pentose phosphate pathway; D-ribose 5-phosphate from D-ribulose 5-phosphate (non-oxidative stage): step 1/1. In terms of biological role, catalyzes the reversible conversion of ribose-5-phosphate to ribulose 5-phosphate. The protein is Ribose-5-phosphate isomerase A of Buchnera aphidicola subsp. Baizongia pistaciae (strain Bp).